The sequence spans 122 residues: Sperm-egg fusion protein LLCFC1 (122 aa).

A signal peptide spans 1-28 (MPPLAPQLCRAVFLVPILLLLQVKPLNG). Positions 27–51 (NGSPGPKDGSQTEKTPSADQNQEQF) are disordered. The span at 38–49 (TEKTPSADQNQE) shows a compositional bias: polar residues.

It localises to the secreted. Sperm protein required for fusion of sperm with the egg membrane during fertilization. The protein is Sperm-egg fusion protein LLCFC1 of Homo sapiens (Human).